A 121-amino-acid chain; its full sequence is Small ribosomal subunit protein uS13 (121 aa).

A disordered region spans residues 93-121 (RGLPMRGQRTRTNARTRKGPRKAAQSLKK).

Belongs to the universal ribosomal protein uS13 family. Part of the 30S ribosomal subunit. Forms a loose heterodimer with protein S19. Forms two bridges to the 50S subunit in the 70S ribosome.

In terms of biological role, located at the top of the head of the 30S subunit, it contacts several helices of the 16S rRNA. In the 70S ribosome it contacts the 23S rRNA (bridge B1a) and protein L5 of the 50S subunit (bridge B1b), connecting the 2 subunits; these bridges are implicated in subunit movement. Contacts the tRNAs in the A and P-sites. The polypeptide is Small ribosomal subunit protein uS13 (Variovorax paradoxus (strain S110)).